Reading from the N-terminus, the 682-residue chain is Potassium-transporting ATPase ATP-binding subunit (682 aa).

4 helical membrane-spanning segments follow: residues 34 to 54 (PVMF…LAMV), 58 to 78 (IAGS…TVLF), 219 to 239 (IALT…TATL), and 254 to 274 (VLVA…LSAI). D307 serves as the catalytic 4-aspartylphosphate intermediate. ATP contacts are provided by residues D344, E348, 377–384 (FTAQSRMS), and K395. Mg(2+)-binding residues include D518 and D522. Helical transmembrane passes span 588–608 (FAII…LNVM), 616–636 (AILS…PLAL), and 662–682 (LVVP…LGLA).

This sequence belongs to the cation transport ATPase (P-type) (TC 3.A.3) family. Type IA subfamily. As to quaternary structure, the system is composed of three essential subunits: KdpA, KdpB and KdpC.

It localises to the cell inner membrane. It carries out the reaction K(+)(out) + ATP + H2O = K(+)(in) + ADP + phosphate + H(+). Functionally, part of the high-affinity ATP-driven potassium transport (or Kdp) system, which catalyzes the hydrolysis of ATP coupled with the electrogenic transport of potassium into the cytoplasm. This subunit is responsible for energy coupling to the transport system and for the release of the potassium ions to the cytoplasm. The polypeptide is Potassium-transporting ATPase ATP-binding subunit (Salmonella paratyphi B (strain ATCC BAA-1250 / SPB7)).